Consider the following 214-residue polypeptide: Non-structural protein NP-1 (214 aa).

Disordered stretches follow at residues 1-87 (MSSE…TNPY) and 192-214 (ESEE…NASN). The span at 33–43 (SRSRSPIRRHG) shows a compositional bias: basic residues. Basic and acidic residues predominate over residues 44-55 (EKNLEYAHHSNQ). The span at 56-71 (ENRQSSYTALKTSDQA) shows a compositional bias: polar residues. Positions 192–201 (ESEEVTDEEM) are enriched in acidic residues.

It belongs to the Bocaparvovirus Non-structural protein NP-1 family.

The protein resides in the host nucleus. Functionally, required for the expression of the capsid proteins. Performs the splicing and internal polyadenylation of the viral capsid-encoding mRNA precursor, which allows its maturation and expression. Transactivates the viral promoter. This chain is Non-structural protein NP-1 (NP1), found in Human bocavirus 2 (HBoV2).